Here is a 280-residue protein sequence, read N- to C-terminus: Probable endonuclease 4 (280 aa).

Positions 68, 108, 143, 177, 180, 214, 227, 229, and 259 each coordinate Zn(2+).

The protein belongs to the AP endonuclease 2 family. The cofactor is Zn(2+).

It catalyses the reaction Endonucleolytic cleavage to 5'-phosphooligonucleotide end-products.. Its function is as follows. Endonuclease IV plays a role in DNA repair. It cleaves phosphodiester bonds at apurinic or apyrimidinic (AP) sites, generating a 3'-hydroxyl group and a 5'-terminal sugar phosphate. The chain is Probable endonuclease 4 from Cenarchaeum symbiosum (strain A).